The sequence spans 287 residues: MWKCSTVINKNKLIKAEYHTFYTLLFAMAVNAVHLESDAFLVCMNHALSTEKEEVMGLCIGEVDTNRIVHIHSVIILRRSDKRKDRVEISPEQLSAASTEAERLAEMTGRPMRVVGWYHSHPHITVWPSHVDVRTQAMYQMMDQGFVGLIFSCFIEDKNTKTGRVLYTCFQSVQAQKGSEYERIEIPIHVVPHEAIGKVCLESAVELPRILCQEEQDTYRRIHSLTHLDPITKIHNGSVFTKNLCSQMSAISGPLLQWLEDRLEQNKQSIITLQKEKELLTQELAAL.

In terms of domain architecture, MPN spans 33–176; it reads VHLESDAFLV…YTCFQSVQAQ (144 aa). Residues histidine 119, histidine 121, and aspartate 132 each coordinate Zn(2+). The JAMM motif motif lies at 119-132; the sequence is HSHPHITVWPSHVD. Residues 256–283 adopt a coiled-coil conformation; it reads LQWLEDRLEQNKQSIITLQKEKELLTQE.

It belongs to the peptidase M67A family. BRCC36 subfamily. As to quaternary structure, monomer. Homodimer. Component of the BRISC complex, at least composed of abraxas2, brcc3, babam1 and babam2. Interacts with abraxas2; the interaction is direct and may form a heterotetramer. Component of the BRCA1-A complex. Both the BRCA1-A complex and the BRISC complex bind polyubiquitin. Zn(2+) is required as a cofactor.

The protein localises to the nucleus. It localises to the cytoplasm. It is found in the cytoskeleton. The protein resides in the spindle pole. Functionally, metalloprotease that specifically cleaves 'Lys-63'-linked polyubiquitin chains, leaving the last ubiquitin chain attached to its substrates. Catalytic subunit of the BRISC complex, a multiprotein complex that specifically cleaves 'Lys-63'-linked ubiquitin in various substrates; brcc3 does not have activity by itself, but needs to be associated into a higher-order assembly, for minimal in vitro activity. The sequence is that of Lys-63-specific deubiquitinase from Danio rerio (Zebrafish).